The primary structure comprises 169 residues: Mitochondrial ATP-independent inner membrane protease subunit 1b (169 aa).

Catalysis depends on residues Ser47 and Lys91.

It belongs to the peptidase S26 family. IMP1 subfamily. As to quaternary structure, heterodimer of 2 subunits, IMP1A/B and IMP12.

It is found in the mitochondrion inner membrane. Its function is as follows. Catalyzes the removal of transit peptides required for the targeting of proteins from the mitochondrial matrix, across the inner membrane, into the inter-membrane space. The polypeptide is Mitochondrial ATP-independent inner membrane protease subunit 1b (Arabidopsis thaliana (Mouse-ear cress)).